The primary structure comprises 222 residues: N-(5'-phosphoribosyl)anthranilate isomerase (222 aa).

The protein belongs to the TrpF family.

The enzyme catalyses N-(5-phospho-beta-D-ribosyl)anthranilate = 1-(2-carboxyphenylamino)-1-deoxy-D-ribulose 5-phosphate. The protein operates within amino-acid biosynthesis; L-tryptophan biosynthesis; L-tryptophan from chorismate: step 3/5. The polypeptide is N-(5'-phosphoribosyl)anthranilate isomerase (Prosthecochloris aestuarii (strain DSM 271 / SK 413)).